The sequence spans 242 residues: MPTSSKNQPRYKRVLLKLSGEALMGEHDFGIDPKVLDRMALEIGALIGIGVQVGLVIGGGNLFRGAALNAAGLDRVTGDHMGMLATVMNGLAMRDALERSNIRTRVMSAIPMSGIVEHYDRRRAVRDLKEGDVVIFSAGTGNPFFTTDSAACLRGIEIEADAVLKATKVDGVYSADPHLDPTAVKYDHLTYDEVLDKKLGVMDLTAICLARDHGMPLRVFDMNRPGVLTRIVTGEREGTLIE.

17-20 (KLSG) contacts ATP. Gly59 is a binding site for UMP. Positions 60 and 64 each coordinate ATP. Residues Asp79 and 140–147 (TGNPFFTT) contribute to the UMP site. Thr167, Tyr173, and Asp176 together coordinate ATP.

Belongs to the UMP kinase family. As to quaternary structure, homohexamer.

The protein localises to the cytoplasm. The enzyme catalyses UMP + ATP = UDP + ADP. Its pathway is pyrimidine metabolism; CTP biosynthesis via de novo pathway; UDP from UMP (UMPK route): step 1/1. Its activity is regulated as follows. Inhibited by UTP. Its function is as follows. Catalyzes the reversible phosphorylation of UMP to UDP. The protein is Uridylate kinase of Marinobacter nauticus (strain ATCC 700491 / DSM 11845 / VT8) (Marinobacter aquaeolei).